The following is a 685-amino-acid chain: Coiled-coil domain-containing protein 8 homolog (685 aa).

Residues Val-93–Val-127 form a disordered region. 2 positions are modified to phosphoserine: Ser-142 and Ser-146. Disordered regions lie at residues Gln-207 to Arg-263, Val-281 to Ala-538, Gln-558 to Thr-579, and Arg-599 to Lys-623. The segment covering Glu-219–Thr-228 has biased composition (polar residues). Over residues Asp-246 to Asp-256 the composition is skewed to basic and acidic residues. 4 stretches are compositionally biased toward low complexity: residues Ala-299 to Glu-329, Glu-337 to Glu-353, Glu-361 to Glu-401, and Glu-409 to Ala-420. Basic and acidic residues predominate over residues Glu-425–Ala-440. Over residues Ala-458–Ala-468 the composition is skewed to low complexity. Basic and acidic residues predominate over residues Glu-473–Ala-488. Residues Glu-505–Arg-519 show a composition bias toward low complexity. Residues Gln-558–Arg-567 show a composition bias toward basic and acidic residues. A compositionally biased stretch (polar residues) spans Ser-611–Val-622. The short motif at Pro-647–Pro-653 is the PxLPxI/L motif; mediates interaction with ANKRA2 element.

As to quaternary structure, component of the 3M complex, composed of core components CUL7, CCDC8 and OBSL1. Interacts (via PxLPxI/L motif) with ANKRA2 (via ankyrin repeats); may link the 3M complex to histone deacetylases including HDAC4 and HDAC5.

The protein localises to the cytoplasm. Its subcellular location is the cytoskeleton. It localises to the microtubule organizing center. The protein resides in the centrosome. Functionally, core component of the 3M complex, a complex required to regulate microtubule dynamics and genome integrity. It is unclear how the 3M complex regulates microtubules, it could act by controlling the level of a microtubule stabilizer. Required for localization of CUL7 to the centrosome. In Mus musculus (Mouse), this protein is Coiled-coil domain-containing protein 8 homolog (Ccdc8).